Here is a 1179-residue protein sequence, read N- to C-terminus: Integrin alpha-7 (1179 aa).

The N-terminal stretch at 1–33 is a signal peptide; it reads MARIPRCDFLRPPGIYYLITSLLAGLFLPPAIA. Topologically, residues 34–1076 are extracellular; the sequence is FNLDVMGAIR…YLDPMAVVVE (1043 aa). FG-GAP repeat units follow at residues 38–103, 110–175, 185–238, 292–349, 350–411, 412–467, and 471–530; these read VMGA…ETDC, RGAN…IRDE, EGRP…SPDL, DRLT…ATRL, IPEV…HWAD, ISPL…GVVV, and QVLE…IDPR. Residue asparagine 86 is glycosylated (N-linked (GlcNAc...) asparagine). Disulfide bonds link cysteine 94–cysteine 103, cysteine 140–cysteine 163, and cysteine 184–cysteine 197. 13 residues coordinate Ca(2+): aspartate 372, asparagine 374, aspartate 376, aspartate 380, aspartate 434, asparagine 436, aspartate 438, aspartate 442, aspartate 492, aspartate 494, asparagine 496, tyrosine 498, and aspartate 500. Cystine bridges form between cysteine 539–cysteine 546, cysteine 552–cysteine 615, cysteine 681–cysteine 687, cysteine 781–cysteine 792, cysteine 939–cysteine 993, and cysteine 999–cysteine 1004. Asparagine 784 carries N-linked (GlcNAc...) asparagine glycosylation. A compositionally biased stretch (basic and acidic residues) spans 952-961; that stretch reads SRDRRRRELG. A disordered region spans residues 952–978; sequence SRDRRRRELGQPEPQEPPEKVEPSTSW. N-linked (GlcNAc...) asparagine glycosylation occurs at asparagine 988. N-linked (GlcNAc...) asparagine glycans are attached at residues asparagine 1023 and asparagine 1043. Residues 1077 to 1102 form a helical membrane-spanning segment; that stretch reads GVPWWVILLGVLAGLLVLALLVLLLW. The Cytoplasmic segment spans residues 1103–1179; sequence KLGFFKRAKH…PDGHPVPATA (77 aa). The GFFKR motif motif lies at 1105-1109; it reads GFFKR. The segment at 1134–1153 is disordered; that stretch reads KEEKTGTIQRSNWGNSQWEG. Polar residues predominate over residues 1139-1152; sequence GTIQRSNWGNSQWE. 3 consecutive repeat copies span residues 1155 to 1158, 1163 to 1166, and 1171 to 1174. The interval 1155 to 1174 is 3 X 4 AA repeats of D-X-H-P; it reads DAHPILAADWHPELGPDGHP.

It belongs to the integrin alpha chain family. Heterodimer of an alpha and a beta subunit. The alpha subunit is composed of a heavy and a light chain linked by a disulfide bond. Alpha-7 associates with beta-1. Interacts with COMP. Interacts (via C-terminus intracellular tail region) with CIB1; the interaction is stabilized/increased in a calcium- and magnesium-dependent manner. In terms of processing, ADP-ribosylated on at least two sites of the extracellular domain in skeletal myotubes (in vitro). No proteolytic cleavage to produce the 70 kDa form is seen due to the presence of a Gly instead of an arginine residue at position 647. In terms of tissue distribution, isoforms containing segment X2 are found in adult heart, lung and skeletal muscle. Isoforms containing segment X1 are expressed in adult heart, lung and in proliferating skeletal myoblasts but not in adult skeletal muscle. Isoforms containing segment a are exclusively found in skeletal muscle. Isoforms containing segment B are widely expressed. In muscle fibers isoforms containing segment A and B are expressed at myotendinous and neuromuscular junctions; isoforms containing segment C are expressed at neuromuscular junctions and at extrasynaptic sites.

Its subcellular location is the membrane. Its function is as follows. Integrin alpha-7/beta-1 is the primary laminin receptor on skeletal myoblasts and adult myofibers. During myogenic differentiation, it may induce changes in the shape and mobility of myoblasts, and facilitate their localization at laminin-rich sites of secondary fiber formation. Involved in the maintenance of the myofibers cytoarchitecture as well as for their anchorage, viability and functional integrity. Mice carrying a ITGA7 null allele are viable and fertile, but show progressive muscular dystrophy starting soon after birth, but with a distinct variability in different muscle types. Required to promote contractile phenotype acquisition in differentiated airway smooth muscle (ASM) cells. Acts as a Schwann cell receptor for laminin-2. Acts as a receptor of COMP and mediates its effect on vascular smooth muscle cells (VSMCs) maturation. The protein is Integrin alpha-7 (Itga7) of Mus musculus (Mouse).